Reading from the N-terminus, the 476-residue chain is Argininosuccinate lyase (476 aa).

This sequence belongs to the lyase 1 family. Argininosuccinate lyase subfamily.

Its subcellular location is the cytoplasm. It carries out the reaction 2-(N(omega)-L-arginino)succinate = fumarate + L-arginine. It participates in amino-acid biosynthesis; L-arginine biosynthesis; L-arginine from L-ornithine and carbamoyl phosphate: step 3/3. This chain is Argininosuccinate lyase, found in Thermobifida fusca (strain YX).